The chain runs to 1376 residues: MAGRPTGGPQGAPSHDLLLDLENDQPVYGGGQRSTLNDDDLMRTYTRDQESGQDQGRPSVSYDDFIGAGQSRQHGTGSQPGGPGQSSSSNNNNNNNVSAPYSRSGRQYSQTSDLGNYQRYADDFDDYPADGDSFYQQGGALNGGGADAAARHNARNRNSVLTMGGGFFGKMKNRLGMGQGYSEMDLPLTEPGGGGGGAGGGGHSRADSSGIDPPKRDKKFDMGNFKFGFGRSKPDPSTLGPRIIHLNNPPANAANKYVNNHVSTAKYNIATFLPKFLLEQFSKIANVFFLFTAALQQIPGLSPTNRFTTIIPLVAVLMVSAGKELVEDYRRKQADAALNTSRAQVLRGSTFEETKWINVAVGDIVRVESEEPFPADIVLLASSEPEGLCYIETANLDGETNLKIKQALPETSQMVSSSELSRLGGRMKSEQPNSSLYTYEATLTMQTGGGEKELPLNPEQLLLRGATLRNTPWIHGVVVFTGHETKLMRNATAAPIKRTKVEKKLNTLVLLLVGILMVLSIISTVGDLIIRRVEGDAISYLMLDQPDTAGKIAETFFKDMVTYWVLFSSLVPISLFVTVEMVKYWHGILINDDLDMYYDRNDTPANCRTSNLVEELGMVEFVFSDKTGTLTCNMMEFKQASIAGIQYADEVPEDRRATIQDGVEVGLHDYKRLKENRKNHSSAPAIDHFLALLATCHTVIPEKGDEKGGKIKYQAASPDEGALVDGAATLGYTFTDRKPKAVFIEVDGQTLEYELLAVCEFNSTRKRMSTIYRCPDGVIRVYCKGADTVILERLNENNPHVEQTLTHLEEYASEGLRTLCLAMREVSEQEFQEWNQVYEKAATTVGGNRAEELDKASEMIEHDFFLLGATAIEDRLQDGVPETIHTLQEANIKVWVLTGDRQETAINIGMSCKLLSEEMMLLIINEESAAATRDNIEKKLEAIRAQGDRTIELETLALVIDGKSLTYALEKDLEKMFLDLAIMCKAVICCRVSPLQKALVVKLVKKYQKESILLAIGDGANDVSMIQAAHIGVGISGEEGLQAARSADVSIAQFRFLKKLLLVHGAWSYQRVAKTILYSFYKNITLYMTQFWYTFRNVFSGAVIYESWTLTFYNVFYTVLPPLALGILDQFISARLLDRYPQLYSMGQQNQFFRMKVFIEWLLNAVYHSIILYVFGELIWHGDLILENGQIAGHWMWGTALYAPVLLTVLGKAGLVTSNWTKYHVIAIPGSMAIWWIFIAVYGTVAPMIPFSPEFHGIVPKLYSSPIFWLQSFALAILCLLRDFAWKYAKRMYRPESYHHIQEIQKYNIQDYRPRMEQFQKAIRKVRQVQRMRKQRGYAFSQADESQARVLQAYDTTQNRGRYGEMTSSRPQGQGT.

A compositionally biased stretch (gly residues) spans Met-1–Gln-10. Disordered regions lie at residues Met-1–Arg-151 and Gly-180–Asp-217. At Met-1–Arg-306 the chain is on the cytoplasmic side. Residues Asp-40–Glu-50 show a composition bias toward basic and acidic residues. Positions Gln-85–Asn-96 are enriched in low complexity. Residues Val-97–Gly-115 are compositionally biased toward polar residues. The span at Pro-191–His-203 shows a compositional bias: gly residues. A helical transmembrane segment spans residues Phe-307 to Glu-327. Over Asp-328 to Val-509 the chain is Extracellular. Asn-339, Asn-433, and Asn-490 each carry an N-linked (GlcNAc...) asparagine glycan. The chain crosses the membrane as a helical span at residues Leu-510–Ile-530. Topologically, residues Arg-531–Asp-559 are cytoplasmic. Residues Met-560–Glu-580 form a helical membrane-spanning segment. The Extracellular portion of the chain corresponds to Met-581 to Ser-1107. The active-site 4-aspartylphosphate intermediate is Asp-625. Asp-625, Lys-626, and Thr-627 together coordinate ATP. Asp-625 contributes to the Mg(2+) binding site. Thr-627 contacts Mg(2+). Asn-679 carries an N-linked (GlcNAc...) asparagine glycan. Residues Glu-720 and Phe-761 each coordinate ATP. An N-linked (GlcNAc...) asparagine glycan is attached at Asn-762. The ATP site is built by Ser-763, Lys-766, Lys-784, Arg-817, Thr-818, Thr-898, Gly-899, Asp-900, Arg-991, and Lys-997. Asp-1018 contributes to the Mg(2+) binding site. ATP-binding residues include Asn-1021 and Asp-1022. Mg(2+) is bound at residue Asp-1022. Asn-1083 carries N-linked (GlcNAc...) asparagine glycosylation. A helical transmembrane segment spans residues Trp-1108–Leu-1128. Residues Asp-1129–Ala-1165 lie on the Cytoplasmic side of the membrane. The helical transmembrane segment at Val-1166–Leu-1186 threads the bilayer. At Glu-1187–Gln-1190 the chain is on the extracellular side. A helical membrane pass occupies residues Ile-1191 to Gly-1211. An a 1,2-diacyl-sn-glycero-3-phospho-(1D-myo-inositol 4-phosphate)-binding site is contributed by Lys-1212. Over Lys-1212 to His-1224 the chain is Cytoplasmic. The helical transmembrane segment at Val-1225–Val-1245 threads the bilayer. Topologically, residues Ala-1246 to Gly-1257 are extracellular. A helical membrane pass occupies residues Ile-1258–Leu-1278. The Cytoplasmic segment spans residues Cys-1279–Thr-1376. The a 1,2-diacyl-sn-glycero-3-phospho-(1D-myo-inositol 4-phosphate) site is built by Arg-1282, Trp-1286, Lys-1287, Tyr-1298, and His-1299.

This sequence belongs to the cation transport ATPase (P-type) (TC 3.A.3) family. Type IV subfamily. The cofactor is Mg(2+).

It is found in the cell membrane. Its subcellular location is the golgi apparatus. The protein localises to the trans-Golgi network membrane. The enzyme catalyses ATP + H2O + phospholipidSide 1 = ADP + phosphate + phospholipidSide 2.. The catalysed reaction is a 1,2-diacyl-sn-glycero-3-phospho-L-serine(out) + ATP + H2O = a 1,2-diacyl-sn-glycero-3-phospho-L-serine(in) + ADP + phosphate + H(+). It carries out the reaction a 1,2-diacyl-sn-glycero-3-phosphoethanolamine(out) + ATP + H2O = a 1,2-diacyl-sn-glycero-3-phosphoethanolamine(in) + ADP + phosphate + H(+). In terms of biological role, catalytic component of a P4-ATPase flippase complex which catalyzes the hydrolysis of ATP coupled to the transport of phosphatidylserine and small amounts of ethanolamine from the lumen to the cytosolic leaflet of the trans-Golgi network and cell membrane and ensures the maintenance of asymmetric distribution of phospholipids. Required for efficient vesicle transport during toxin secretion. This is Phospholipid-transporting ATPase DRS2 (DRS2) from Verticillium dahliae (strain VdLs.17 / ATCC MYA-4575 / FGSC 10137) (Verticillium wilt).